A 502-amino-acid polypeptide reads, in one-letter code: Nondiscriminating glutamyl-tRNA synthetase EARS2, mitochondrial (502 aa).

Residues M1–F20 constitute a mitochondrion transit peptide. R19–G21 contacts L-glutamate. The short motif at P24 to G32 is the 'HIGH' region element. H29 contacts ATP. L-glutamate contacts are provided by residues E55, Y207–N211, and R225. Residues E228 and K263–R267 each bind ATP. Positions K263–R267 match the 'KMSKS' region motif.

This sequence belongs to the class-I aminoacyl-tRNA synthetase family. Glutamate--tRNA ligase type 1 subfamily.

The protein resides in the mitochondrion matrix. The enzyme catalyses tRNA(Glx) + L-glutamate + ATP = L-glutamyl-tRNA(Glx) + AMP + diphosphate. It carries out the reaction tRNA(Glu) + L-glutamate + ATP = L-glutamyl-tRNA(Glu) + AMP + diphosphate. The catalysed reaction is tRNA(Gln) + L-glutamate + ATP = L-glutamyl-tRNA(Gln) + AMP + diphosphate. In terms of biological role, non-discriminating glutamyl-tRNA synthetase that catalyzes aminoacylation of both mitochondrial tRNA(Glu) and tRNA(Gln) and participates in RNA aminoacylation for mitochondrial protein translation. Attachs glutamate to tRNA(Glu) or tRNA(Gln) in a two-step reaction: glutamate is first activated by ATP to form Glu-AMP and then transferred to the acceptor end of tRNA(Glu) or tRNA(Gln). The sequence is that of Nondiscriminating glutamyl-tRNA synthetase EARS2, mitochondrial from Gallus gallus (Chicken).